Reading from the N-terminus, the 132-residue chain is MAILISPSNNTGWGLGTHKLFGGAKQKSDQHPVYVQAHYRAPWGGKGRRRPGRARGVPLDPKTEAEVVATIDEVARNGPPAARLVLEAARRVGAYNLRRARKLTPAGRAMAAMRARQMVNQAKRRKRRVRSK.

Residues 2-23 constitute a propeptide that is removed on maturation; sequence AILISPSNNTGWGLGTHKLFGG. A Nuclear localization signal motif is present at residues 124 to 132; it reads RRKRRVRSK.

Belongs to the adenoviridae histone-like nucleoprotein family. As to quaternary structure, interacts with the core-capsid bridging protein; this interaction bridges the virus core to the capsid. Interacts with host NPM1; this interaction might play a role in placing the pre-histone-like nucleoprotein on the viral DNA or regulating viral gene expression. Interacts with host HMGB1; this interaction inhibits host immune response. Cleaved near the N-terminus by the viral protease during virion maturation to form the mature protein.

The protein localises to the virion. It is found in the host nucleus. It localises to the host nucleolus. Functionally, plays a role in the inhibition of host immune response within the nucleus. Interacts with cellular nucleosomes and immobilizes the host immune danger signal HMGB1 on chromatin. In turn, prevents HMGB1 release out of the cell and thus decreases inflammation. Also plays a role in the wrapping and condensation of the viral DNA. May also promote viral genome import into the nucleus. The protein is Pre-histone-like nucleoprotein of Canine adenovirus serotype 1 (strain CLL) (CAdV-1).